We begin with the raw amino-acid sequence, 443 residues long: Chromosomal replication initiator protein DnaA (443 aa).

Residues 1-80 (MTSQFASLWQ…LGESVEVRFF (80 aa)) are domain I, interacts with DnaA modulators. Residues 80–104 (FTPSADSRRSEPSRRPVATEESSPP) are domain II. The disordered stretch occupies residues 83–105 (SADSRRSEPSRRPVATEESSPPL). Basic and acidic residues predominate over residues 85 to 97 (DSRRSEPSRRPVA). Positions 105–321 (LLNPKYTFDT…GALNRVIAYA (217 aa)) are domain III, AAA+ region. ATP-binding residues include Gly-149, Gly-151, Lys-152, and Thr-153. Residues 322-443 (NLSGKSLTSE…QVLKEKIQRA (122 aa)) are domain IV, binds dsDNA.

This sequence belongs to the DnaA family. As to quaternary structure, oligomerizes as a right-handed, spiral filament on DNA at oriC.

It localises to the cytoplasm. Plays an essential role in the initiation and regulation of chromosomal replication. ATP-DnaA binds to the origin of replication (oriC) to initiate formation of the DNA replication initiation complex once per cell cycle. Binds the DnaA box (a 9 base pair repeat at the origin) and separates the double-stranded (ds)DNA. Forms a right-handed helical filament on oriC DNA; dsDNA binds to the exterior of the filament while single-stranded (ss)DNA is stabiized in the filament's interior. The ATP-DnaA-oriC complex binds and stabilizes one strand of the AT-rich DNA unwinding element (DUE), permitting loading of DNA polymerase. After initiation quickly degrades to an ADP-DnaA complex that is not apt for DNA replication. Binds acidic phospholipids. In Heliobacterium modesticaldum (strain ATCC 51547 / Ice1), this protein is Chromosomal replication initiator protein DnaA.